The chain runs to 79 residues: Acyl carrier protein (79 aa).

In terms of domain architecture, Carrier spans 1–79; that stretch reads MTKEQILVDV…DVVSYIETQV (79 aa). An O-(pantetheine 4'-phosphoryl)serine modification is found at Ser39.

It belongs to the acyl carrier protein (ACP) family. Post-translationally, 4'-phosphopantetheine is transferred from CoA to a specific serine of apo-ACP by AcpS. This modification is essential for activity because fatty acids are bound in thioester linkage to the sulfhydryl of the prosthetic group.

It is found in the cytoplasm. The protein operates within lipid metabolism; fatty acid biosynthesis. Functionally, carrier of the growing fatty acid chain in fatty acid biosynthesis. The polypeptide is Acyl carrier protein (Exiguobacterium sibiricum (strain DSM 17290 / CCUG 55495 / CIP 109462 / JCM 13490 / 255-15)).